Here is a 248-residue protein sequence, read N- to C-terminus: Probable transcriptional regulatory protein Syncc9902_0542 (248 aa).

The protein belongs to the TACO1 family.

The protein localises to the cytoplasm. The sequence is that of Probable transcriptional regulatory protein Syncc9902_0542 from Synechococcus sp. (strain CC9902).